The primary structure comprises 263 residues: Ribosomal RNA small subunit methyltransferase A (263 aa).

S-adenosyl-L-methionine is bound by residues His13, Leu15, Gly40, Glu61, Asp86, and Asn105.

It belongs to the class I-like SAM-binding methyltransferase superfamily. rRNA adenine N(6)-methyltransferase family. RsmA subfamily.

It localises to the cytoplasm. It carries out the reaction adenosine(1518)/adenosine(1519) in 16S rRNA + 4 S-adenosyl-L-methionine = N(6)-dimethyladenosine(1518)/N(6)-dimethyladenosine(1519) in 16S rRNA + 4 S-adenosyl-L-homocysteine + 4 H(+). Its function is as follows. Specifically dimethylates two adjacent adenosines (A1518 and A1519) in the loop of a conserved hairpin near the 3'-end of 16S rRNA in the 30S particle. May play a critical role in biogenesis of 30S subunits. In Dichelobacter nodosus (strain VCS1703A), this protein is Ribosomal RNA small subunit methyltransferase A.